Reading from the N-terminus, the 333-residue chain is Eukaryotic translation initiation factor 3 subunit I (333 aa).

WD repeat units follow at residues 8–47 (GHER…RLGT), 50–91 (GHTG…ALLK), 144–183 (CNDS…VLVN), and 186–225 (EHSR…HQKT). The residue at position 219 (threonine 219) is a Phosphothreonine. The residue at position 264 (lysine 264) is an N6-acetyllysine. Lysine 282 is covalently cross-linked (Glycyl lysine isopeptide (Lys-Gly) (interchain with G-Cter in ubiquitin)). The stretch at 283–324 (GHFGPINSVAFHPDGKSYSSGGEDGYVRIHYFDPQYFEFEFE) is one WD 5 repeat. Phosphotyrosine is present on tyrosine 308.

Belongs to the eIF-3 subunit I family. As to quaternary structure, component of the eukaryotic translation initiation factor 3 (eIF-3) complex, which is composed of 13 subunits: EIF3A, EIF3B, EIF3C, EIF3D, EIF3E, EIF3F, EIF3G, EIF3H, EIF3I, EIF3J, EIF3K, EIF3L and EIF3M. The eIF-3 complex appears to include 3 stable modules: module A is composed of EIF3A, EIF3B, EIF3G and EIF3I; module B is composed of EIF3F, EIF3H, and EIF3M; and module C is composed of EIF3C, EIF3D, EIF3E, EIF3K and EIF3L. EIF3C of module C binds EIF3B of module A and EIF3H of module B, thereby linking the three modules. EIF3J is a labile subunit that binds to the eIF-3 complex via EIF3B. The eIF-3 complex interacts with RPS6KB1 under conditions of nutrient depletion. Mitogenic stimulation leads to binding and activation of a complex composed of MTOR and RPTOR, leading to phosphorylation and release of RPS6KB1 and binding of EIF4B to eIF-3. In terms of processing, phosphorylated by TGF-beta type II receptor.

It is found in the cytoplasm. In terms of biological role, component of the eukaryotic translation initiation factor 3 (eIF-3) complex, which is required for several steps in the initiation of protein synthesis. The eIF-3 complex associates with the 40S ribosome and facilitates the recruitment of eIF-1, eIF-1A, eIF-2:GTP:methionyl-tRNAi and eIF-5 to form the 43S pre-initiation complex (43S PIC). The eIF-3 complex stimulates mRNA recruitment to the 43S PIC and scanning of the mRNA for AUG recognition. The eIF-3 complex is also required for disassembly and recycling of post-termination ribosomal complexes and subsequently prevents premature joining of the 40S and 60S ribosomal subunits prior to initiation. The eIF-3 complex specifically targets and initiates translation of a subset of mRNAs involved in cell proliferation, including cell cycling, differentiation and apoptosis, and uses different modes of RNA stem-loop binding to exert either translational activation or repression. The protein is Eukaryotic translation initiation factor 3 subunit I of Oryctolagus cuniculus (Rabbit).